The following is a 426-amino-acid chain: C2H2 type master regulator of conidiophore development brlA (426 aa).

Disordered regions lie at residues 25–71 (CPSM…DRGT) and 281–302 (GVRL…KQSL). Positions 30–44 (SSFSPLESPTPTPTS) are enriched in low complexity. Polar residues predominate over residues 45–58 (IYSQGSLASPSWPE). Residues 288-297 (PSRKMARKQP) show a composition bias toward basic residues. 2 C2H2-type zinc fingers span residues 316 to 340 (FKCK…MKSH) and 346 to 371 (HVCW…TKTH). Positions 384-426 (LDETSPDYNPDYRGPLTADGRPMPGGTLDESMPSREISMEWDE) are disordered.

It is found in the nucleus. Its function is as follows. BrlA, abaA and wetA are pivotal regulators of conidiophore development and conidium maturation. They act individually and together to regulate their own expression and that of numerous other sporulation-specific genes. Binds promoters of target genes at brlA response elements (BREs) containing the conserved sequence 5'-(C/A)(A/G)AGGG(G/A)-3'. Positively regulates expression of the gliotoxin biosynthetic gene cluster in actively growing vegetative cells, and likely bridges morphological and chemical development during the life-cycle. Regulates (directly or indirectly) the ergot cluster genes. Positively regulates expression of the fumiquinazoline C biosynthetic gene cluster. Positively regulates expression of the melanin biosynthetic gene cluster. Mediates repression of ribosomal protein gene expression in response to nitrogen depletion. The chain is C2H2 type master regulator of conidiophore development brlA from Aspergillus fumigatus (strain ATCC MYA-4609 / CBS 101355 / FGSC A1100 / Af293) (Neosartorya fumigata).